Consider the following 486-residue polypeptide: ATP-dependent rRNA helicase RRP3 (486 aa).

Residues 1-58 (MNGAKRRKVAQDTPRNTKPVAQEKPARAEPKPSSDEESEEESATLEEPSAEETAVDAP) are disordered. Positions 24–34 (KPARAEPKPSS) are enriched in basic and acidic residues. The segment covering 35–54 (DEESEEESATLEEPSAEETA) has biased composition (acidic residues). Positions 60 to 88 (KTFKDLGVNDALCEACEKLNYKYPTPIQE) match the Q motif motif. Positions 91-262 (IPVALQGRDI…RASLRDPVKV (172 aa)) constitute a Helicase ATP-binding domain. 104–111 (AETGSGKT) contributes to the ATP binding site. The short motif at 210 to 213 (DEAD) is the DEAD box element. The Helicase C-terminal domain maps to 286–434 (QKDVHLIYLI…EYPTEKEEVM (149 aa)). 2 stretches are compositionally biased toward basic and acidic residues: residues 451–460 (MKSFTEERGK) and 476–486 (RGRDDMDREEG). A disordered region spans residues 451 to 486 (MKSFTEERGKKGSTLKGGRGKKGGKRGRDDMDREEG).

This sequence belongs to the DEAD box helicase family. DDX47/RRP3 subfamily. Interacts with the SSU processome.

It is found in the nucleus. The enzyme catalyses ATP + H2O = ADP + phosphate + H(+). Its function is as follows. ATP-dependent rRNA helicase required for pre-ribosomal RNA processing. Involved in the maturation of the 35S-pre-rRNA and to its cleavage to mature 18S rRNA. The protein is ATP-dependent rRNA helicase RRP3 of Gibberella zeae (strain ATCC MYA-4620 / CBS 123657 / FGSC 9075 / NRRL 31084 / PH-1) (Wheat head blight fungus).